A 1317-amino-acid chain; its full sequence is Immunoglobulin superfamily member 1 (1317 aa).

Positions 1 to 20 (MMLRTFTLLLLCIWLNPGMT) are cleaved as a signal peptide. 5 consecutive Ig-like C2-type domains span residues 21–112 (SLAV…KILE), 114–211 (EAPG…KLVV), 216–302 (PKPT…SDIL), 311–398 (PKTW…ATYN), and 400–481 (VELM…HRSK). The Extracellular portion of the chain corresponds to 21–499 (SLAVESQPEL…GFLTWNSILN (479 aa)). A glycan (N-linked (GlcNAc...) asparagine) is linked at Asn-43. Cys-48 and Cys-96 form a disulfide bridge. A disulfide bond links Cys-238 and Cys-286. 2 N-linked (GlcNAc...) asparagine glycosylation sites follow: Asn-328 and Asn-371. Cystine bridges form between Cys-333/Cys-382 and Cys-422/Cys-465. The helical transmembrane segment at 500-520 (EAVRVSLTMQLASLLLLVVWI) threads the bilayer. Residues 521 to 531 (RWKCRRLRLRE) are Cytoplasmic-facing. The helical transmembrane segment at 532-552 (AWLLGTAQGVAMLFILMALLC) threads the bilayer. At 553–1317 (CGLCNGALTE…EVSVELTVPI (765 aa)) the chain is on the extracellular side. Ig-like C2-type domains follow at residues 570-658 (TPKP…ALEL), 659-753 (VGTD…ELVI), 758-850 (PKPF…LVVT), 854-938 (PKPT…SSLS), 946-1041 (TDTF…ELIV), 1046-1131 (PKPS…NHSN), and 1142-1223 (PKPS…EPSD). Cys-780 and Cys-830 are oxidised to a cystine. Asn-871 is a glycosylation site (N-linked (GlcNAc...) asparagine). The cysteines at positions 876 and 923 are disulfide-linked. 2 N-linked (GlcNAc...) asparagine glycosylation sites follow: Asn-967 and Asn-1063. 2 cysteine pairs are disulfide-bonded: Cys-1068–Cys-1115 and Cys-1164–Cys-1207. Positions 1290-1310 (NQEGEPGTTTNSPSSASQEVS) are disordered. The segment covering 1296-1309 (GTTTNSPSSASQEV) has biased composition (polar residues).

As to quaternary structure, interacts with INHA; the interaction is not confirmed by standard receptor binding assays. Interacts with ACVR1B; the interaction appears to be ligand-dependent as it is diminished by inhibin B and activin A. Interacts with ACVR2A, ACVR2B, ACVRL1 and BMPR1B. Interacts with HECTD1.

It localises to the membrane. It is found in the secreted. Seems to be a coreceptor in inhibin signaling, but seems not to be a high-affinity inhibin receptor. Antagonizes activin A signaling in the presence or absence of inhibin B. Necessary to mediate a specific antagonistic effect of inhibin B on activin-stimulated transcription. This is Immunoglobulin superfamily member 1 (Igsf1) from Mus musculus (Mouse).